The sequence spans 342 residues: P21 prophage-derived major head protein (342 aa).

Belongs to the lambda phage major capsid protein family.

The chain is P21 prophage-derived major head protein from Escherichia coli O6:H1 (strain CFT073 / ATCC 700928 / UPEC).